The sequence spans 452 residues: Probable hexaprenyl pyrophosphate synthase, mitochondrial (452 aa).

3 residues coordinate isopentenyl diphosphate: K108, R111, and H204. D211 and D215 together coordinate Mg(2+). R220 contributes to the an all-trans-polyprenyl diphosphate binding site. Residue R221 participates in isopentenyl diphosphate binding. K303, T304, Q341, and K358 together coordinate an all-trans-polyprenyl diphosphate.

It belongs to the FPP/GGPP synthase family. Mg(2+) serves as cofactor.

The protein resides in the mitochondrion. Its pathway is cofactor biosynthesis; ubiquinone biosynthesis. Assembly of polyisoprenoid side chains. The polyprenyl synthase of coenzyme Q biosynthesis catalyzes the formation from isopentenyl diphosphate of all trans-polyprenyl pyrophosphates generally ranging in length of between 6 and 10 isoprene units depending on the species. This is Probable hexaprenyl pyrophosphate synthase, mitochondrial (COQ1) from Yarrowia lipolytica (strain CLIB 122 / E 150) (Yeast).